A 212-amino-acid polypeptide reads, in one-letter code: Octanoyltransferase (212 aa).

The region spanning 33-212 (GTAPELVWLL…ATFPEVFGAD (180 aa)) is the BPL/LPL catalytic domain. Substrate is bound by residues 72–79 (RGGQYTYH), 144–146 (AIG), and 157–159 (GIA). Cys175 acts as the Acyl-thioester intermediate in catalysis.

It belongs to the LipB family.

The protein resides in the cytoplasm. It carries out the reaction octanoyl-[ACP] + L-lysyl-[protein] = N(6)-octanoyl-L-lysyl-[protein] + holo-[ACP] + H(+). Its pathway is protein modification; protein lipoylation via endogenous pathway; protein N(6)-(lipoyl)lysine from octanoyl-[acyl-carrier-protein]: step 1/2. Functionally, catalyzes the transfer of endogenously produced octanoic acid from octanoyl-acyl-carrier-protein onto the lipoyl domains of lipoate-dependent enzymes. Lipoyl-ACP can also act as a substrate although octanoyl-ACP is likely to be the physiological substrate. This Paramagnetospirillum magneticum (strain ATCC 700264 / AMB-1) (Magnetospirillum magneticum) protein is Octanoyltransferase.